Reading from the N-terminus, the 165-residue chain is Pro-MCH (165 aa).

The signal sequence occupies residues 1-21 (MAKMNLSSYILILTFSLFSQG). Position 143 is an isoleucine amide (Ile-143). Cys-153 and Cys-162 are joined by a disulfide.

This sequence belongs to the melanin-concentrating hormone family. Differentially processed in the brain and in peripheral organs producing two neuropeptides; NEI and MCH. A third peptide, NGE, may also be produced. Preferential processing in neurons by prohormone convertase 2 (PC2) generates NEI. MCH is generated in neurons of the lateral hypothalmic area by several prohormone convertases including PC1/3, PC2 and PC5/6. In terms of tissue distribution, predominantly expressed in lateral hypothalamus, also detected in pallidum, neocortex and cerebellum. Also found in thymus, brown adipose tissue, duodenum and testis (spermatogonia, early spermatocytes and Sertoli cells). No expression in peripheral blood. In brain exclusively mature MCH and NEI peptides are present. In peripheral tissues a large product, encompassing the NEI and MCH domains of the precursor, is found predominantly.

Its subcellular location is the secreted. MCH may act as a neurotransmitter or neuromodulator in a broad array of neuronal functions directed toward the regulation of goal-directed behavior, such as food intake, and general arousal. May also have a role in spermatocyte differentiation. The sequence is that of Pro-MCH (PMCH) from Homo sapiens (Human).